The chain runs to 126 residues: Large ribosomal subunit protein bL12 (126 aa).

Belongs to the bacterial ribosomal protein bL12 family. Homodimer. Part of the ribosomal stalk of the 50S ribosomal subunit. Forms a multimeric L10(L12)X complex, where L10 forms an elongated spine to which 2 to 4 L12 dimers bind in a sequential fashion. Binds GTP-bound translation factors.

In terms of biological role, forms part of the ribosomal stalk which helps the ribosome interact with GTP-bound translation factors. Is thus essential for accurate translation. In Helicobacter hepaticus (strain ATCC 51449 / 3B1), this protein is Large ribosomal subunit protein bL12.